Consider the following 246-residue polypeptide: UPF0736 protein GWCH70_0753 (246 aa).

It belongs to the UPF0736 family.

The sequence is that of UPF0736 protein GWCH70_0753 from Geobacillus sp. (strain WCH70).